Here is a 331-residue protein sequence, read N- to C-terminus: Adenosine deaminase (331 aa).

Residues His12 and His14 each contribute to the Zn(2+) site. Substrate contacts are provided by His14, Asp16, and Gly170. His197 provides a ligand contact to Zn(2+). Glu200 (proton donor) is an active-site residue. Asp278 is a binding site for Zn(2+). Asp279 lines the substrate pocket.

It belongs to the metallo-dependent hydrolases superfamily. Adenosine and AMP deaminases family. Adenosine deaminase subfamily. The cofactor is Zn(2+).

It catalyses the reaction adenosine + H2O + H(+) = inosine + NH4(+). It carries out the reaction 2'-deoxyadenosine + H2O + H(+) = 2'-deoxyinosine + NH4(+). Catalyzes the hydrolytic deamination of adenosine and 2-deoxyadenosine. This Shewanella sp. (strain W3-18-1) protein is Adenosine deaminase.